Here is a 636-residue protein sequence, read N- to C-terminus: NADP-dependent malic enzyme, chloroplastic (636 aa).

The tract at residues 1–28 is disordered; that stretch reads MLSTRTAAVAASASPASPWKLGGRSEGG. The N-terminal 62 residues, 1–62, are a transit peptide targeting the chloroplast; it reads MLSTRTAAVA…LPPRRVDAVA (62 aa). Residues 7-18 show a composition bias toward low complexity; sequence AAVAASASPASP. The active-site Proton donor is the Tyr-184. Residue Arg-237 participates in NAD(+) binding. The active-site Proton acceptor is the Lys-255. The a divalent metal cation site is built by Glu-327, Asp-328, and Asp-351. An NAD(+)-binding site is contributed by Asp-351. 380–396 contributes to the NADP(+) binding site; it reads LFLGAGEAGTGIAELIA. An NAD(+)-binding site is contributed by Asn-492.

Belongs to the malic enzymes family. Homotetramer. Mg(2+) serves as cofactor. Requires Mn(2+) as cofactor.

It localises to the plastid. The protein localises to the chloroplast. The enzyme catalyses (S)-malate + NADP(+) = pyruvate + CO2 + NADPH. The catalysed reaction is oxaloacetate + H(+) = pyruvate + CO2. It participates in photosynthesis; C4 acid pathway. The chloroplastic ME isoform decarboxylates malate shuttled from neighboring mesophyll cells. The CO(2) released is then refixed by ribulose-bisphosphate carboxylase. This pathway eliminates the photorespiratory loss of CO(2) that occurs in most plants. The sequence is that of NADP-dependent malic enzyme, chloroplastic (MOD1) from Zea mays (Maize).